Here is a 121-residue protein sequence, read N- to C-terminus: Small ribosomal subunit protein uS13 (121 aa).

Positions 89-121 are disordered; sequence MRHRRGLPVRGQHTKNNARTRKGKAVSIAGKKK.

It belongs to the universal ribosomal protein uS13 family. As to quaternary structure, part of the 30S ribosomal subunit. Forms a loose heterodimer with protein S19. Forms two bridges to the 50S subunit in the 70S ribosome.

Located at the top of the head of the 30S subunit, it contacts several helices of the 16S rRNA. In the 70S ribosome it contacts the 23S rRNA (bridge B1a) and protein L5 of the 50S subunit (bridge B1b), connecting the 2 subunits; these bridges are implicated in subunit movement. Contacts the tRNAs in the A and P-sites. In Levilactobacillus brevis (strain ATCC 367 / BCRC 12310 / CIP 105137 / JCM 1170 / LMG 11437 / NCIMB 947 / NCTC 947) (Lactobacillus brevis), this protein is Small ribosomal subunit protein uS13.